The primary structure comprises 279 residues: Movement protein (279 aa).

The interval 246-279 is disordered; sequence SESEELNVESPPAAIGSSSASRSEAFRPQVVNGL. Over residues 254–268 the composition is skewed to low complexity; it reads ESPPAAIGSSSASRS.

This sequence belongs to the cucumovirus movement protein family.

The protein resides in the host cell junction. Its subcellular location is the host plasmodesma. Its function is as follows. Transports viral genome to neighboring plant cells directly through plasmosdesmata, without any budding. The movement protein allows efficient cell to cell propagation, by bypassing the host cell wall barrier. Acts by forming a tubular structure at the host plasmodesmata, enlarging it enough to allow free passage of virion capsids. The protein is Movement protein of Cucumber mosaic virus (strain N) (CMV).